A 138-amino-acid polypeptide reads, in one-letter code: Holo-[acyl-carrier-protein] synthase (138 aa).

The Mg(2+) site is built by D8 and E57.

It belongs to the P-Pant transferase superfamily. AcpS family. Mg(2+) serves as cofactor.

It is found in the cytoplasm. It carries out the reaction apo-[ACP] + CoA = holo-[ACP] + adenosine 3',5'-bisphosphate + H(+). In terms of biological role, transfers the 4'-phosphopantetheine moiety from coenzyme A to a Ser of acyl-carrier-protein. The protein is Holo-[acyl-carrier-protein] synthase of Phenylobacterium zucineum (strain HLK1).